A 951-amino-acid polypeptide reads, in one-letter code: Metal transporter CNNM1 (951 aa).

A helical membrane pass occupies residues 23-43 (AVLLLFFSLSPRPPAAAAWLL). The interval 116-135 (GGVAPSAVPTRPPGPQRCRE) is disordered. Residues 218-414 (LLPPAWLRAL…DPYSDLVKEE (197 aa)) enclose the CNNM transmembrane domain. Helical transmembrane passes span 222–242 (AWLR…FSGL), 282–302 (LLCT…GWLY), and 321–341 (IHFP…GAEI). CBS domains follow at residues 433–495 (LTPL…CTPL) and 502–568 (YNRP…ILDE). Polar residues-rich tracts occupy residues 731–740 (SRCSGLNRSE) and 814–824 (KAPTTRGTPQT). 2 disordered regions span residues 731-753 (SRCS…GGSN) and 795-830 (MDSS…DDPA). 2 positions are modified to phosphothreonine: threonine 821 and threonine 824. Serine 850 carries the phosphoserine modification. Residues 920 to 951 (KLLRTLSGQKRKRSPEGERTSEDNSNLTPLIT) are disordered. Positions 942 to 951 (DNSNLTPLIT) are enriched in polar residues.

It belongs to the ACDP family. In terms of tissue distribution, restricted to brain and testis.

The protein resides in the cell membrane. Functionally, probable metal transporter. In Homo sapiens (Human), this protein is Metal transporter CNNM1 (CNNM1).